The primary structure comprises 316 residues: Pantothenate kinase (316 aa).

95–102 (GSVAVGKS) is an ATP binding site.

This sequence belongs to the prokaryotic pantothenate kinase family.

It is found in the cytoplasm. The catalysed reaction is (R)-pantothenate + ATP = (R)-4'-phosphopantothenate + ADP + H(+). Its pathway is cofactor biosynthesis; coenzyme A biosynthesis; CoA from (R)-pantothenate: step 1/5. In Shewanella baltica (strain OS223), this protein is Pantothenate kinase.